Here is a 728-residue protein sequence, read N- to C-terminus: Catalase-peroxidase 1 (728 aa).

The first 22 residues, 1–22 (MDKTQSSQGKCPVMHGANSAVA), serve as a signal peptide directing secretion. A cross-link (tryptophyl-tyrosyl-methioninium (Trp-Tyr) (with M-251)) is located at residues 97-225 (WHSAGTYRVA…LAAVMMGLIY (129 aa)). His-98 serves as the catalytic Proton acceptor. The segment at residues 225 to 251 (YVNPEGVDGKPDPLRTAQDVRVTFARM) is a cross-link (tryptophyl-tyrosyl-methioninium (Tyr-Met) (with W-97)). A heme b-binding site is contributed by His-266.

This sequence belongs to the peroxidase family. Peroxidase/catalase subfamily. As to quaternary structure, homodimer or homotetramer. Heme b is required as a cofactor. Formation of the three residue Trp-Tyr-Met cross-link is important for the catalase, but not the peroxidase activity of the enzyme.

The enzyme catalyses H2O2 + AH2 = A + 2 H2O. It carries out the reaction 2 H2O2 = O2 + 2 H2O. Bifunctional enzyme with both catalase and broad-spectrum peroxidase activity. In Shewanella sp. (strain MR-7), this protein is Catalase-peroxidase 1.